A 1935-amino-acid chain; its full sequence is Myosin-7 (1935 aa).

Residues 32-81 (DLKKDVFVPDDKEEFVKAKIISREGGKITAETEHGKTVTVKEDQVLQQNP) form the Myosin N-terminal SH3-like domain. Residues 85–778 (DKIEDMAMLT…LLGLLEEMRD (694 aa)) enclose the Myosin motor domain. Lysine 129 carries the N6,N6,N6-trimethyllysine modification. 178–185 (GESGAGKT) provides a ligand contact to ATP. The residue at position 378 (threonine 378) is a Phosphothreonine. Actin-binding regions lie at residues 655-677 (LNKL…IPNE) and 757-771 (RFGH…GLLG). Positions 781-810 (LSRIITRIQAQSRGVLARMEFKKLLERRDS) constitute an IQ domain. The stretch at 839-1935 (LLKSAETEKE…DIGTKGLNEE (1097 aa)) forms a coiled coil. 2 positions are modified to phosphoserine: serine 1137 and serine 1269. A Phosphothreonine modification is found at threonine 1282. Tyrosine 1308 is modified (phosphotyrosine). Threonine 1309 is subject to Phosphothreonine. Phosphoserine is present on serine 1510. Threonine 1513 carries the post-translational modification Phosphothreonine. The tract at residues 1907-1935 (EERADIAESQVNKLRAKSRDIGTKGLNEE) is disordered. Positions 1923-1935 (KSRDIGTKGLNEE) are enriched in basic and acidic residues.

It belongs to the TRAFAC class myosin-kinesin ATPase superfamily. Myosin family. In terms of assembly, muscle myosin is a hexameric protein that consists of 2 heavy chain subunits (MHC), 2 alkali light chain subunits (MLC) and 2 regulatory light chain subunits (MLC-2). Interacts with ECPAS. Interacts (via C-terminus) with LRRC39.

The protein localises to the cytoplasm. Its subcellular location is the myofibril. The protein resides in the sarcomere. Functionally, myosins are actin-based motor molecules with ATPase activity essential for muscle contraction. Forms regular bipolar thick filaments that, together with actin thin filaments, constitute the fundamental contractile unit of skeletal and cardiac muscle. The polypeptide is Myosin-7 (MYH7) (Equus caballus (Horse)).